Here is a 598-residue protein sequence, read N- to C-terminus: Beta-myrcene/(E)-beta-ocimene synthase 2, chloroplastic (598 aa).

The N-terminal 30 residues, 1–30, are a transit peptide targeting the chloroplast; that stretch reads MATLCIGSAPIYQNACIHNFRLQRPRRFIS. Arg-307, Asp-344, Asp-348, Arg-486, and Asn-489 together coordinate (2E)-geranyl diphosphate. Residues Asp-344 and Asp-348 each coordinate Mg(2+). A DDXXD motif motif is present at residues 344-348; it reads DDIYD. Positions 489, 493, and 497 each coordinate Mg(2+).

The protein belongs to the terpene synthase family. Tpsb subfamily. Requires Mg(2+) as cofactor. It depends on Mn(2+) as a cofactor. In terms of tissue distribution, expressed exclusively in mature flowers, but not in inmmature buds.

It is found in the plastid. The protein resides in the chloroplast. It carries out the reaction (2E)-geranyl diphosphate = beta-myrcene + diphosphate. It functions in the pathway secondary metabolite biosynthesis; terpenoid biosynthesis. Its function is as follows. Involved in monoterpene (C10) biosynthesis. The major products are alpha- and beta-pinene, sabinene, beta-myrcene, (E)-beta-ocimene and limonene. The protein is Beta-myrcene/(E)-beta-ocimene synthase 2, chloroplastic (TPS24) of Arabidopsis thaliana (Mouse-ear cress).